The sequence spans 149 residues: Calmodulin-1 (149 aa).

Alanine 2 bears the N-acetylalanine mark. EF-hand domains are found at residues 8–43 (EQIAEFKEAFSLFDKDGDGTITTKELGTVMRSLGQN), 44–79 (PTEAELQDMINEVDADGNGTIDFPEFLTMMARKMKD), 81–116 (DSEEEIREAFRVFDKDGNGYISAAELRHVMTNLGEK), and 117–149 (LTDEEVDEMIREADIDGDGQVNYEEFVQMMTAK). A Ca(2+)-binding site is contributed by aspartate 21. Lysine 22 is subject to N6-acetyllysine; alternate. Lysine 22 is covalently cross-linked (Glycyl lysine isopeptide (Lys-Gly) (interchain with G-Cter in SUMO2); alternate). A Glycyl lysine isopeptide (Lys-Gly) (interchain with G-Cter in ubiquitin); alternate cross-link involves residue lysine 22. Ca(2+) contacts are provided by aspartate 23, aspartate 25, threonine 27, and glutamate 32. Position 45 is a phosphothreonine; by CaMK4 (threonine 45). Ca(2+) contacts are provided by aspartate 57, aspartate 59, asparagine 61, threonine 63, and glutamate 68. The necessary and sufficient for interaction with PCP4 stretch occupies residues 77 to 149 (MKDTDSEEEI…EEFVQMMTAK (73 aa)). Serine 82 is modified (phosphoserine). Aspartate 94 provides a ligand contact to Ca(2+). The residue at position 95 (lysine 95) is an N6-acetyllysine. Ca(2+) contacts are provided by aspartate 96, asparagine 98, and tyrosine 100. Tyrosine 100 carries the post-translational modification Phosphotyrosine. Serine 102 carries the phosphoserine modification. Residue glutamate 105 coordinates Ca(2+). Threonine 111 carries the post-translational modification Phosphothreonine. Lysine 116 carries the post-translational modification N6,N6,N6-trimethyllysine; alternate. Lysine 116 is modified (N6-methyllysine; alternate). Residues aspartate 130, aspartate 132, aspartate 134, and glutamine 136 each contribute to the Ca(2+) site. At tyrosine 139 the chain carries Phosphotyrosine. Position 141 (glutamate 141) interacts with Ca(2+).

It belongs to the calmodulin family. Homotetramer. Interacts with MYO1C, MYO5A and RRAD. Interacts with MYO10. Interacts with CEP97, CCP110, TTN/titin and SRY. Interacts with USP6; the interaction is calcium dependent. Interacts with CDK5RAP2. Interacts with SCN5A. Interacts with RYR1. Interacts with FCHO1. Interacts with MIP in a 1:2 stoichiometry; the interaction with the cytoplasmic domains from two MIP subunits promotes MIP water channel closure. Interacts with ORAI1; this may play a role in the regulation of ORAI1-mediated calcium transport. Interacts with IQCF1. Interacts with SYT7. Interacts with CEACAM1 (via cytoplasmic domain); this interaction is in a calcium dependent manner and reduces homophilic cell adhesion through dissociation of dimer. Interacts with RYR2; regulates RYR2 calcium-release channel activity. Interacts with PCP4; regulates calmodulin calcium-binding. Interacts with the heterotetrameric KCNQ2 and KCNQ3 channel; the interaction is calcium-independent, constitutive and participates in the proper assembly of a functional heterotetrameric M channel. Interacts with alpha-synuclein/SNCA. Interacts with SLC9A1 in a calcium-dependent manner. In the absence of Ca(+2), interacts with GIMAP4 (via IQ domain). Interacts with SCN8A; the interaction modulates the inactivation rate of SCN8A. Interaction with KIF1A; the interaction is increased in presence of calcium and increases neuronal dense core vesicles motility. Interacts with KCNN3. Interacts with KCNQ1 (via C-terminus); forms a heterooctameric structure (with 4:4 KCNQ1:CALM stoichiometry) in a calcium-independent manner. Interacts with PIK3C3; the interaction modulates PIK3C3 kinase activity. Interacts with HINT1; interaction increases in the presence of calcium ions. Interacts with HINT3. Interacts with GARIN2; in mature sperm flagella. Interacts with IQUB. Interacts with SLC26A5 (via STAS domain); this interaction is calcium-dependent and the STAS domain interacts with only one lobe of CALM which is an elongated conformation. Ca(2+)-bound CALM1 binds CNGA1:CNGB1 channel (via CaM1 and CaM2 regions); this interaction modulates the affinity of the channel for cNMPs in response to intracellular Ca(2+) levels. Interacts with ITPR1; this interaction inhibits inositol 1,4,5 trisphosphate binding in both the presence and absence of calcium and 1,4,5 trisphosphate-induced calcium release in the presence of calcium. Component of the SIFI complex. Interacts with KCNN4; this interaction allows channel opening. Interacts with KCNN2; this interaction regulates the channel activity through calcium-binding. In terms of assembly, (Microbial infection) Interacts with Rubella virus protease/methyltransferase p150. As to quaternary structure, (Microbial infection) Interacts with Legionella pneumophila glutamylase SidJ. (Microbial infection) Interacts with C.violaceum CopC. C.violaceum CopC interacts specifically with the apo form of calmodulin. In terms of assembly, (Microbial infection) Interacts with S.flexneri OspC1 and OspC3. S.flexneri OspC1 and OspC3 interact specifically with the apo form of calmodulin and prevents calcium-binding. In terms of processing, ubiquitination results in a strongly decreased activity. Phosphorylation results in a decreased activity.

The protein resides in the cytoplasm. Its subcellular location is the cytoskeleton. It localises to the spindle. The protein localises to the spindle pole. It is found in the microtubule organizing center. The protein resides in the centrosome. Its subcellular location is the cell projection. It localises to the cilium. The protein localises to the flagellum. Its activity is regulated as follows. (Microbial infection) Inactivated by S.flexneri OspC1 and OspC3 proteins, which specifically bind the apo-form of calmodulin, thereby preventing calcium-binding and activity. Its function is as follows. Calmodulin acts as part of a calcium signal transduction pathway by mediating the control of a large number of enzymes, ion channels, aquaporins and other proteins through calcium-binding. Calcium-binding is required for the activation of calmodulin. Among the enzymes to be stimulated by the calmodulin-calcium complex are a number of protein kinases, such as myosin light-chain kinases and calmodulin-dependent protein kinase type II (CaMK2), and phosphatases. Together with CCP110 and centrin, is involved in a genetic pathway that regulates the centrosome cycle and progression through cytokinesis. Is a regulator of voltage-dependent L-type calcium channels. Mediates calcium-dependent inactivation of CACNA1C. Positively regulates calcium-activated potassium channel activity of KCNN2. Forms a potassium channel complex with KCNQ1 and regulates electrophysiological activity of the channel via calcium-binding. Acts as a sensor to modulate the endoplasmic reticulum contacts with other organelles mediated by VMP1:ATP2A2. (Microbial infection) Required for Legionella pneumophila SidJ glutamylase activity. In terms of biological role, (Microbial infection) Required for C.violaceum CopC and S.flexneri OspC3 arginine ADP-riboxanase activity. This chain is Calmodulin-1, found in Homo sapiens (Human).